A 226-amino-acid polypeptide reads, in one-letter code: 2-C-methyl-D-erythritol 4-phosphate cytidylyltransferase (226 aa).

This sequence belongs to the IspD/TarI cytidylyltransferase family. IspD subfamily.

The enzyme catalyses 2-C-methyl-D-erythritol 4-phosphate + CTP + H(+) = 4-CDP-2-C-methyl-D-erythritol + diphosphate. It functions in the pathway isoprenoid biosynthesis; isopentenyl diphosphate biosynthesis via DXP pathway; isopentenyl diphosphate from 1-deoxy-D-xylulose 5-phosphate: step 2/6. Its function is as follows. Catalyzes the formation of 4-diphosphocytidyl-2-C-methyl-D-erythritol from CTP and 2-C-methyl-D-erythritol 4-phosphate (MEP). The polypeptide is 2-C-methyl-D-erythritol 4-phosphate cytidylyltransferase (Microcystis aeruginosa (strain NIES-843 / IAM M-2473)).